The primary structure comprises 258 residues: Elongation factor Ts (258 aa).

Positions T81 to V84 are involved in Mg(2+) ion dislocation from EF-Tu. The disordered stretch occupies residues G216–K258. Over residues P229–A241 the composition is skewed to pro residues. The span at A249–K258 shows a compositional bias: basic residues.

The protein belongs to the EF-Ts family.

It is found in the cytoplasm. Associates with the EF-Tu.GDP complex and induces the exchange of GDP to GTP. It remains bound to the aminoacyl-tRNA.EF-Tu.GTP complex up to the GTP hydrolysis stage on the ribosome. This is Elongation factor Ts from Synechococcus sp. (strain JA-2-3B'a(2-13)) (Cyanobacteria bacterium Yellowstone B-Prime).